We begin with the raw amino-acid sequence, 25 residues long: Caerin 2.1 (25 aa).

As to expression, expressed by the skin dorsal glands.

It is found in the secreted. Its function is as follows. Antibacterial peptide with narrow spectrum of activity. Active against the Gram-negative bacterium P.multocida (MIC=25 ug/ml). Inhibits the formation of NO by neuronal nitric oxide synthase with an IC(50) of 9 ug/ml. The sequence is that of Caerin 2.1 from Litoria peronii (Emerald spotted tree frog).